Reading from the N-terminus, the 169-residue chain is Ubiquitin-fold modifier-conjugating enzyme 1 (169 aa).

The active-site Glycyl thioester intermediate is Cys-116.

Belongs to the ubiquitin-conjugating enzyme family. UFC1 subfamily.

Functionally, E2-like enzyme which forms an intermediate with UFM1 via a thioester linkage. The protein is Ubiquitin-fold modifier-conjugating enzyme 1 of Branchiostoma floridae (Florida lancelet).